The primary structure comprises 551 residues: Membrane protein insertase YidC (551 aa).

Residues 3 to 23 (ANHIRILLLVTIAIMFISLMG) form a helical membrane-spanning segment. Residues 33-47 (NTKQQTSATQNNSHY) show a composition bias toward polar residues. The segment at 33 to 59 (NTKQQTSATQNNSHYDNADSSTNTDVT) is disordered. The span at 50-59 (ADSSTNTDVT) shows a compositional bias: low complexity. Transmembrane regions (helical) follow at residues 361–381 (LVGN…LIFY), 431–451 (LSGC…YWVL), and 504–524 (VMMF…SGLV).

The protein belongs to the OXA1/ALB3/YidC family. Type 1 subfamily. In terms of assembly, interacts with the Sec translocase complex via SecD. Specifically interacts with transmembrane segments of nascent integral membrane proteins during membrane integration.

It localises to the cell inner membrane. Required for the insertion and/or proper folding and/or complex formation of integral membrane proteins into the membrane. Involved in integration of membrane proteins that insert both dependently and independently of the Sec translocase complex, as well as at least some lipoproteins. Aids folding of multispanning membrane proteins. The sequence is that of Membrane protein insertase YidC from Francisella tularensis subsp. tularensis (strain SCHU S4 / Schu 4).